We begin with the raw amino-acid sequence, 872 residues long: DNA mismatch repair protein MutS (872 aa).

Gly602 to Ser609 contributes to the ATP binding site.

It belongs to the DNA mismatch repair MutS family.

Functionally, this protein is involved in the repair of mismatches in DNA. It is possible that it carries out the mismatch recognition step. This protein has a weak ATPase activity. This Staphylococcus aureus (strain Mu3 / ATCC 700698) protein is DNA mismatch repair protein MutS.